The primary structure comprises 567 residues: ETHYLENE INSENSITIVE 3-like 3 protein (567 aa).

Positions 24–44 (NVAEIDVSDEEIDADDLERRM) form a coiled coil. Disordered regions lie at residues 55-81 (KERQKAGSQGAQTKETPKKISDQAQRK) and 286-393 (IQQP…RNIL). Basic and acidic residues predominate over residues 69 to 79 (ETPKKISDQAQ). A DNA-binding region spans residues 162-288 (SQFVLQDLQD…LNQEESLIQQ (127 aa)). Over residues 286–299 (IQQPSSDNGNSNVT) the composition is skewed to polar residues. Over residues 300 to 312 (ETHRRGNNADRRK) the composition is skewed to basic and acidic residues. Residues 363-372 (KHRRRKRPRI) show a composition bias toward basic residues.

This sequence belongs to the EIN3 family. In terms of assembly, interacts with MYB72.

The protein resides in the nucleus. Functionally, probable transcription factor that may be involved in the ethylene response pathway. The chain is ETHYLENE INSENSITIVE 3-like 3 protein (EIL3) from Arabidopsis thaliana (Mouse-ear cress).